The chain runs to 134 residues: Phosphoribosyl-AMP cyclohydrolase (134 aa).

Position 90 (Asp90) interacts with Mg(2+). Zn(2+) is bound at residue Cys91. Residues Asp92 and Asp94 each contribute to the Mg(2+) site. Zn(2+)-binding residues include Cys107 and Cys114.

It belongs to the PRA-CH family. As to quaternary structure, homodimer. Mg(2+) is required as a cofactor. Requires Zn(2+) as cofactor.

It is found in the cytoplasm. It catalyses the reaction 1-(5-phospho-beta-D-ribosyl)-5'-AMP + H2O = 1-(5-phospho-beta-D-ribosyl)-5-[(5-phospho-beta-D-ribosylamino)methylideneamino]imidazole-4-carboxamide. It participates in amino-acid biosynthesis; L-histidine biosynthesis; L-histidine from 5-phospho-alpha-D-ribose 1-diphosphate: step 3/9. Functionally, catalyzes the hydrolysis of the adenine ring of phosphoribosyl-AMP. This chain is Phosphoribosyl-AMP cyclohydrolase, found in Arthrobacter sp. (strain FB24).